The following is a 495-amino-acid chain: Chromosomal replication initiator protein DnaA (495 aa).

Positions 1 to 83 are domain I, interacts with DnaA modulators; sequence MSVALWQQCL…KVQLTVGSRR (83 aa). The tract at residues 83–158 is domain II; it reads RNVAMSSPRD…QVEGSLKHQS (76 aa). Positions 86–127 are disordered; the sequence is AMSSPRDLGAPVSATTMNASRPTEAPAVHAAPRAKGDYADEQ. A domain III, AAA+ region region spans residues 159 to 375; sequence GLNPNFTFET…GALKKVIADS (217 aa). ATP is bound by residues Gly-203, Gly-205, Lys-206, and Thr-207. Residues 376 to 495 are domain IV, binds dsDNA; it reads HFMGKPITQD…YKNLLRLLTS (120 aa).

It belongs to the DnaA family. Oligomerizes as a right-handed, spiral filament on DNA at oriC.

The protein resides in the cytoplasm. Its function is as follows. Plays an essential role in the initiation and regulation of chromosomal replication. ATP-DnaA binds to the origin of replication (oriC) to initiate formation of the DNA replication initiation complex once per cell cycle. Binds the DnaA box (a 9 base pair repeat at the origin) and separates the double-stranded (ds)DNA. Forms a right-handed helical filament on oriC DNA; dsDNA binds to the exterior of the filament while single-stranded (ss)DNA is stabiized in the filament's interior. The ATP-DnaA-oriC complex binds and stabilizes one strand of the AT-rich DNA unwinding element (DUE), permitting loading of DNA polymerase. After initiation quickly degrades to an ADP-DnaA complex that is not apt for DNA replication. Binds acidic phospholipids. This chain is Chromosomal replication initiator protein DnaA, found in Chromohalobacter salexigens (strain ATCC BAA-138 / DSM 3043 / CIP 106854 / NCIMB 13768 / 1H11).